The sequence spans 713 residues: Phosphoribosylformylglycinamidine synthase subunit PurL (713 aa).

The active site involves His34. 2 residues coordinate ATP: Tyr37 and Arg73. Mg(2+) is bound at residue Glu75. Substrate-binding positions include 76 to 79 (SHNH) and Arg98. His77 acts as the Proton acceptor in catalysis. A Mg(2+)-binding site is contributed by Asp99. Gln221 is a binding site for substrate. Asp249 serves as a coordination point for Mg(2+). 292–294 (ESQ) is a binding site for substrate. ATP is bound by residues Asp474 and Gly511. Substrate is bound at residue Ser514.

It belongs to the FGAMS family. Monomer. Part of the FGAM synthase complex composed of 1 PurL, 1 PurQ and 2 PurS subunits.

The protein resides in the cytoplasm. The enzyme catalyses N(2)-formyl-N(1)-(5-phospho-beta-D-ribosyl)glycinamide + L-glutamine + ATP + H2O = 2-formamido-N(1)-(5-O-phospho-beta-D-ribosyl)acetamidine + L-glutamate + ADP + phosphate + H(+). Its pathway is purine metabolism; IMP biosynthesis via de novo pathway; 5-amino-1-(5-phospho-D-ribosyl)imidazole from N(2)-formyl-N(1)-(5-phospho-D-ribosyl)glycinamide: step 1/2. In terms of biological role, part of the phosphoribosylformylglycinamidine synthase complex involved in the purines biosynthetic pathway. Catalyzes the ATP-dependent conversion of formylglycinamide ribonucleotide (FGAR) and glutamine to yield formylglycinamidine ribonucleotide (FGAM) and glutamate. The FGAM synthase complex is composed of three subunits. PurQ produces an ammonia molecule by converting glutamine to glutamate. PurL transfers the ammonia molecule to FGAR to form FGAM in an ATP-dependent manner. PurS interacts with PurQ and PurL and is thought to assist in the transfer of the ammonia molecule from PurQ to PurL. In Ignicoccus hospitalis (strain KIN4/I / DSM 18386 / JCM 14125), this protein is Phosphoribosylformylglycinamidine synthase subunit PurL.